Here is a 492-residue protein sequence, read N- to C-terminus: N-succinylglutamate 5-semialdehyde dehydrogenase (492 aa).

Gly220–Gly225 contributes to the NAD(+) binding site. Residues Glu243 and Cys277 contribute to the active site.

The protein belongs to the aldehyde dehydrogenase family. AstD subfamily.

It carries out the reaction N-succinyl-L-glutamate 5-semialdehyde + NAD(+) + H2O = N-succinyl-L-glutamate + NADH + 2 H(+). It functions in the pathway amino-acid degradation; L-arginine degradation via AST pathway; L-glutamate and succinate from L-arginine: step 4/5. Catalyzes the NAD-dependent reduction of succinylglutamate semialdehyde into succinylglutamate. The chain is N-succinylglutamate 5-semialdehyde dehydrogenase from Shigella flexneri serotype 5b (strain 8401).